Consider the following 221-residue polypeptide: N-(5'-phosphoribosyl)anthranilate isomerase (221 aa).

The protein belongs to the TrpF family.

It catalyses the reaction N-(5-phospho-beta-D-ribosyl)anthranilate = 1-(2-carboxyphenylamino)-1-deoxy-D-ribulose 5-phosphate. Its pathway is amino-acid biosynthesis; L-tryptophan biosynthesis; L-tryptophan from chorismate: step 3/5. The polypeptide is N-(5'-phosphoribosyl)anthranilate isomerase (Geobacillus thermodenitrificans (strain NG80-2)).